Consider the following 798-residue polypeptide: Protocadherin beta-14 (798 aa).

A signal peptide spans 1 to 26; it reads MEIRGALDLRKRQVLIFLVLLGLSRA. The Extracellular segment spans residues 27 to 686; it reads GTESAHYSVA…APAQAQADSL (660 aa). Cadherin domains lie at 35-133, 138-242, 247-347, 352-451, and 456-561; these read VAEE…SPTF, ILIK…APEF, YEVQ…PPEV, ITKR…APTF, and YTLF…SPFV. A disulfide bridge links Cys96 with Cys102. An N-linked (GlcNAc...) asparagine glycan is attached at Asn169. Residues Asn359, Asn418, Asn436, Asn487, and Asn567 are each glycosylated (N-linked (GlcNAc...) asparagine). A Cadherin 6 domain is found at 568-671; sequence GSAPCTELVP…LVDGFSQPYL (104 aa). The helical transmembrane segment at 687–711 threads the bilayer; sequence TVYLVVALASVSSLFLFSVLLFVAV. At 712–798 the chain is on the cytoplasmic side; sequence RLCRRSRAAS…FRNSFGLNIQ (87 aa).

The protein resides in the cell membrane. In terms of biological role, potential calcium-dependent cell-adhesion protein. May be involved in the establishment and maintenance of specific neuronal connections in the brain. This chain is Protocadherin beta-14 (PCDHB14), found in Homo sapiens (Human).